The chain runs to 245 residues: B-cell receptor-associated protein 31 (245 aa).

The Lumenal segment spans residues 2–6 (SLQWT). A helical transmembrane segment spans residues 7–27 (TVATFLYAEVFAVLLLCIPFI). Topologically, residues 28–43 (SPKRWQKVFKSRLVEL) are cytoplasmic. A helical membrane pass occupies residues 44 to 64 (VVTYGNTFFVVLIVILVLLVI). Over 65–102 (DAVREILKYDDVTEKVNLQNNPGAMEHFHMKLFRAQRN) the chain is Lumenal. Residues 103–123 (LYIAGFSLLLSFLLRRLVTLI) traverse the membrane as a helical segment. The Cytoplasmic segment spans residues 124–245 (SQQATLLASN…VRGPSVKKEE (122 aa)). The stretch at 165 to 236 (GDKLDIGNTE…EEHAKLQASV (72 aa)) forms a coiled coil. The short motif at 242 to 245 (KKEE) is the Di-lysine motif element.

It belongs to the BCAP29/BCAP31 family. In terms of assembly, homodimer and heterodimer with BCAP29. Binds CASP8 (isoform 9) as a complex containing BCAP31, BCAP29, BCL2 and/or BCL2L1. Forms a complex (via C-terminus) with TOMM40 which mediates the translocation of components of the mitochondrial membrane respiratory chain NADH dehydrogenase (Complex I) from the cytosol to the mitochondria; within the complex BCAP31 interacts directly with unprocessed and processed NDUFS4 and NDUFB11. Interacts with VDAC1. Interacts with VAMP3, VAMP1 and membrane IgD immunoglobulins. Interacts with HACD2. Interacts with DNM1L; may form part of a larger protein complex at the endoplasmic reticulum-mitochondrial interface during mitochondrial fission. Post-translationally, cleaved by CASP8 and other caspases. As to expression, ubiquitous.

The protein resides in the endoplasmic reticulum membrane. The protein localises to the endoplasmic reticulum-Golgi intermediate compartment membrane. In terms of biological role, functions as a chaperone protein. Is one of the most abundant endoplasmic reticulum (ER) proteins. Plays a role in the export of secreted proteins in the ER, the recognition of abnormally folded protein and their targeting to the ER associated-degradation (ERAD). Also serves as a cargo receptor for the export of transmembrane proteins. Plays a role in the assembly of the mitochondrial membrane respiratory chain NADH dehydrogenase (Complex I) by stimulating the translocation of NDUFS4 and NDUFB11 from the cytosol to the mitochondria via interaction with TOMM40. In response to ER stress, delocalizes from the ER-mitochondria contact sites and binds BCL2. May be involved in CASP8-mediated apoptosis. The polypeptide is B-cell receptor-associated protein 31 (Bcap31) (Mus musculus (Mouse)).